We begin with the raw amino-acid sequence, 467 residues long: Asparagine--tRNA ligase (467 aa).

Belongs to the class-II aminoacyl-tRNA synthetase family. As to quaternary structure, homodimer.

It localises to the cytoplasm. The enzyme catalyses tRNA(Asn) + L-asparagine + ATP = L-asparaginyl-tRNA(Asn) + AMP + diphosphate + H(+). This chain is Asparagine--tRNA ligase, found in Actinobacillus pleuropneumoniae serotype 3 (strain JL03).